The chain runs to 269 residues: tRNA pseudouridine synthase A (269 aa).

The Nucleophile role is filled by Asp-51. Tyr-109 contacts substrate.

It belongs to the tRNA pseudouridine synthase TruA family. Homodimer.

It carries out the reaction uridine(38/39/40) in tRNA = pseudouridine(38/39/40) in tRNA. Functionally, formation of pseudouridine at positions 38, 39 and 40 in the anticodon stem and loop of transfer RNAs. This is tRNA pseudouridine synthase A from Aeromonas salmonicida (strain A449).